We begin with the raw amino-acid sequence, 346 residues long: Fe(3+) ions import ATP-binding protein FbpC 2 (346 aa).

In terms of domain architecture, ABC transporter spans Leu5–Ile235. Position 37-44 (Gly37–Thr44) interacts with ATP.

It belongs to the ABC transporter superfamily. Fe(3+) ion importer (TC 3.A.1.10) family. As to quaternary structure, the complex is composed of two ATP-binding proteins (FbpC), two transmembrane proteins (FbpB) and a solute-binding protein (FbpA).

It localises to the cell membrane. The enzyme catalyses Fe(3+)(out) + ATP + H2O = Fe(3+)(in) + ADP + phosphate + H(+). Functionally, part of the ABC transporter complex FbpABC involved in Fe(3+) ions import. Responsible for energy coupling to the transport system. The sequence is that of Fe(3+) ions import ATP-binding protein FbpC 2 from Rhodococcus jostii (strain RHA1).